Reading from the N-terminus, the 399-residue chain is MTLFSFPNYVNWNKFDFIVLGAGISGIVLSHVLAQHGKSVLLLEKRNQLGGNCYDKLDETTGLLFHQYGPHIFHTDNQKVMDFIQPFFELNNYQHRVGLQLDNNLDLTLPFDFSQMRKLLDTKTASSLINFFQQHFPAEKHLTLMQLQTINFAPVQQLYQFLKIKVYGPYSVKMWGMPLEQIDPSVLGRVKISLSENSSYFPTATIQGLPKGGYTKAFTKMVDHPLIDLRLNCPANLISVNNNQLLFANQPITKPVVYCGLIDQLFGYCFGRLQYRSLHFEWKRYAVKQHQAYPVMNWPLHPTITRQVEYKQLTQEGLESNQTIVSCETPGAFREGDPRFMEPYYPLNDVSNNALFARYLKLANAIPNIHLLGRLALYQYIDMDRAIAQSLAKAEQLLQ.

Residues Ser-25, 44–45 (EK), Asn-52, and 71–72 (HI) each bind FAD. UDP-alpha-D-galactose-binding residues include Ser-171, Trp-175, Tyr-200, Asn-297, Arg-306, and Tyr-345. Arg-374 contacts FAD. Tyr-380 is a binding site for UDP-alpha-D-galactose. FAD is bound at residue 381-386 (IDMDRA).

Belongs to the UDP-galactopyranose/dTDP-fucopyranose mutase family. It depends on FAD as a cofactor.

The catalysed reaction is UDP-alpha-D-galactose = UDP-alpha-D-galactofuranose. Involved in the conversion of UDP-GalP into UDP-GalF through a 2-keto intermediate. The protein is UDP-galactopyranose mutase (glf) of Mycoplasma pneumoniae (strain ATCC 29342 / M129 / Subtype 1) (Mycoplasmoides pneumoniae).